An 84-amino-acid polypeptide reads, in one-letter code: Mitochondrial import inner membrane translocase subunit Tim9 (84 aa).

Positions 28-52 (CFMDCVKDFTTREVKPEETTCSESC) match the Twin CX3C motif motif. Cystine bridges form between C28-C52 and C32-C48.

It belongs to the small Tim family. In terms of assembly, heterohexamer; composed of 3 copies of TIMM9 and 3 copies of TIMM10/TIM10A, named soluble 70 kDa complex. The complex forms a 6-bladed alpha-propeller structure and associates with the TIMM22 component of the TIM22 complex. Interacts with multi-pass transmembrane proteins in transit.

It is found in the mitochondrion inner membrane. Functionally, mitochondrial intermembrane chaperone that participates in the import and insertion of multi-pass transmembrane proteins into the mitochondrial inner membrane. May also be required for the transfer of beta-barrel precursors from the TOM complex to the sorting and assembly machinery (SAM complex) of the outer membrane. Acts as a chaperone-like protein that protects the hydrophobic precursors from aggregation and guide them through the mitochondrial intermembrane space. This Danio rerio (Zebrafish) protein is Mitochondrial import inner membrane translocase subunit Tim9 (timm9).